Consider the following 325-residue polypeptide: Homoserine O-succinyltransferase (325 aa).

Cysteine 142 (acyl-thioester intermediate) is an active-site residue. Substrate-binding residues include lysine 163 and serine 191. The active-site Proton acceptor is the histidine 234. Residue glutamate 236 is part of the active site. Residue arginine 248 coordinates substrate.

The protein belongs to the MetA family.

The protein localises to the cytoplasm. The enzyme catalyses L-homoserine + succinyl-CoA = O-succinyl-L-homoserine + CoA. Its pathway is amino-acid biosynthesis; L-methionine biosynthesis via de novo pathway; O-succinyl-L-homoserine from L-homoserine: step 1/1. Its function is as follows. Transfers a succinyl group from succinyl-CoA to L-homoserine, forming succinyl-L-homoserine. The protein is Homoserine O-succinyltransferase of Bradyrhizobium japonicum.